The chain runs to 327 residues: tRNA uridine(34) hydroxylase (327 aa).

The 95-residue stretch at Ser-123–Ser-217 folds into the Rhodanese domain. Residue Cys-177 is the Cysteine persulfide intermediate of the active site.

The protein belongs to the TrhO family.

It carries out the reaction uridine(34) in tRNA + AH2 + O2 = 5-hydroxyuridine(34) in tRNA + A + H2O. Catalyzes oxygen-dependent 5-hydroxyuridine (ho5U) modification at position 34 in tRNAs. The sequence is that of tRNA uridine(34) hydroxylase from Shewanella piezotolerans (strain WP3 / JCM 13877).